Reading from the N-terminus, the 378-residue chain is Erythronate-4-phosphate dehydrogenase (378 aa).

Positions 45 and 66 each coordinate substrate. Positions 146 and 175 each coordinate NAD(+). The active site involves Arg-208. Asp-232 is a binding site for NAD(+). Glu-237 is a catalytic residue. The active-site Proton donor is the His-254. Gly-257 serves as a coordination point for NAD(+). Residue Tyr-258 participates in substrate binding.

Belongs to the D-isomer specific 2-hydroxyacid dehydrogenase family. PdxB subfamily. Homodimer.

The protein resides in the cytoplasm. The catalysed reaction is 4-phospho-D-erythronate + NAD(+) = (R)-3-hydroxy-2-oxo-4-phosphooxybutanoate + NADH + H(+). The protein operates within cofactor biosynthesis; pyridoxine 5'-phosphate biosynthesis; pyridoxine 5'-phosphate from D-erythrose 4-phosphate: step 2/5. In terms of biological role, catalyzes the oxidation of erythronate-4-phosphate to 3-hydroxy-2-oxo-4-phosphonooxybutanoate. This Escherichia coli O6:H1 (strain CFT073 / ATCC 700928 / UPEC) protein is Erythronate-4-phosphate dehydrogenase.